A 240-amino-acid polypeptide reads, in one-letter code: Arylmalonate decarboxylase (240 aa).

The catalysed reaction is 2-aryl-2-methylmalonate + H(+) = 2-arylpropionate + CO2. In Bordetella bronchiseptica (Alcaligenes bronchisepticus), this protein is Arylmalonate decarboxylase.